Consider the following 131-residue polypeptide: Probable flagellum biosynthesis repressor protein FlbT (131 aa).

It belongs to the FlbT family.

Functionally, has a post-transcriptional repressor function in flagellum biogenesis. Associates with the 5'-UTR of fljK mRNA and promotes its degradation. This Caulobacter sp. (strain K31) protein is Probable flagellum biosynthesis repressor protein FlbT.